Reading from the N-terminus, the 136-residue chain is uncharacterized protein (136 aa).

A helical membrane pass occupies residues 40–62 (LFYSISLCVSLLLHISLCVSVYV).

It localises to the membrane. This is an uncharacterized protein from Homo sapiens (Human).